Reading from the N-terminus, the 310-residue chain is Vomeronasal type-1 receptor 40 (310 aa).

Residues Met-1–Glu-20 are Extracellular-facing. The chain crosses the membrane as a helical span at residues Val-21–Gly-41. At Glu-42 to Leu-50 the chain is on the cytoplasmic side. The chain crosses the membrane as a helical span at residues Tyr-51 to Val-71. Topologically, residues Asp-72–Arg-93 are extracellular. Cysteines 85 and 172 form a disulfide. A helical transmembrane segment spans residues Leu-94–Leu-114. Topologically, residues Ser-115–Gly-134 are cytoplasmic. Residues Ala-135–Ile-155 traverse the membrane as a helical segment. Residues Ala-156–Ala-190 lie on the Extracellular side of the membrane. The N-linked (GlcNAc...) asparagine glycan is linked to Asn-159. Residues Ile-191–Leu-211 form a helical membrane-spanning segment. Residues Trp-212–Arg-238 lie on the Cytoplasmic side of the membrane. Residues Thr-239–Tyr-259 form a helical membrane-spanning segment. Residues Ser-260 to Ser-268 lie on the Extracellular side of the membrane. A helical membrane pass occupies residues Ile-269–Phe-289. Over Ile-290–Ile-310 the chain is Cytoplasmic.

Belongs to the G-protein coupled receptor 1 family.

The protein resides in the cell membrane. Functionally, putative pheromone receptor implicated in the regulation of social and reproductive behavior. This Mus musculus (Mouse) protein is Vomeronasal type-1 receptor 40 (Vmn1r40).